A 686-amino-acid chain; its full sequence is Methionine--tRNA ligase (686 aa).

Residues 22–32 (PYANGPIHLGH) carry the 'HIGH' region motif. Zn(2+) is bound by residues Cys153, Cys156, Cys166, and Cys169. The 'KMSKS' region signature appears at 337 to 341 (KMSKS). Lys340 contacts ATP. Positions 547 to 573 (MLEDSKESTPAPAAAKPKKAATQKADA) are disordered. The tRNA-binding domain occupies 584–686 (DFLKVKLRVA…SGAEPGMEVR (103 aa)).

Belongs to the class-I aminoacyl-tRNA synthetase family. MetG type 1 subfamily. Homodimer. The cofactor is Zn(2+).

It localises to the cytoplasm. It carries out the reaction tRNA(Met) + L-methionine + ATP = L-methionyl-tRNA(Met) + AMP + diphosphate. Is required not only for elongation of protein synthesis but also for the initiation of all mRNA translation through initiator tRNA(fMet) aminoacylation. This chain is Methionine--tRNA ligase, found in Alcanivorax borkumensis (strain ATCC 700651 / DSM 11573 / NCIMB 13689 / SK2).